The primary structure comprises 1507 residues: DDB1- and CUL4-associated factor 1 (1507 aa).

Positions 141–500 (QPLRTYSTGL…STLEILNLED (360 aa)) are protein kinase-like. Residues serine 202 and serine 255 each carry the phosphoserine modification. The segment at 242–288 (HLDSGHKTSSRVNSTTKPEDGGLKKNKSAKQGDRENFRKAKQKLGFS) is disordered. In terms of domain architecture, Chromo spans 562–593 (SYTHEQIVEMMEFLIEYGPAQLYWEPAEVFLK). Lysine 701 carries the N6-acetyllysine modification. Serine 828 carries the phosphoserine modification. The 33-residue stretch at 846 to 878 (PEKELLLLIRNHLISKGLGETATVLTKEADLPM) folds into the LisH domain. At threonine 888 the chain carries Phosphothreonine. Phosphoserine occurs at positions 895 and 898. The segment at 917–947 (AAVGASAPSAPTAHPQPRPPQGPLALPGPSY) is disordered. 2 positions are modified to phosphoserine: serine 979 and serine 1000. WD repeat units follow at residues 1091-1130 (EDES…EEAS), 1133-1174 (CHNS…DMKH), 1176-1213 (FTED…KLLT), 1215-1247 (FNPD…WDVR), and 1248-1290 (SAQA…LLHT). The interval 1091–1290 (EDESGFTCCA…DLRTFHLLHT (200 aa)) is WD repeat-like region. Short sequence motifs (DWD box) lie at residues 1242 to 1249 (VLWDVRSA) and 1278 to 1285 (EIWDLRTF). Serine 1328 is modified (phosphoserine). A disordered region spans residues 1393–1507 (RLAEDEDEEE…EDDIILSLNE (115 aa)). Acidic residues-rich tracts occupy residues 1396 to 1483 (EDED…EEVE) and 1490 to 1501 (DSSDNSDLEDDI). Positions 1418–1507 (DDDTDDLDEL…EDDIILSLNE (90 aa)) are interaction with NF2.

This sequence belongs to the VPRBP/DCAF1 family. In terms of assembly, component of the DCX (DDB1-CUL4-X-box) E3 ubiquitin-protein ligase complex, named CUL4A-RBX1-DDB1-DCAF1/VPRBP complex. Interacts with DDB1; the interaction is direct. Also forms a ternary complex with DDA1 and DDB1. Interacts with NF2 (via FERM domain). Component of the EDVP complex, a E3 ligase complex containing DYRK2, EDD/UBR5, DDB1 and DCAF1. Interacts with DYRK2; the interaction is direct. Interacts with RAG1; the interaction is direct. Interacts with LLGL1 and LLGL2. Interacts with histone H3. Interacts with ESR1 and LATS1; probably recruited by LATS1 to promote ESR1 ubiquitination and ubiquitin-mediated proteasomal degradation. Directly interacts with TET1, TET2 and TET3 (via C-terminus). Interacts with CEP78; promoting DCAF1 localization to centrosomes. (Microbial infection) Interacts with HIV-1 virus Vpr protein; the interaction is direct. As to quaternary structure, (Microbial infection) Interacts with HIV-2 virus Vpx protein; the interaction is direct and the complex recruits SAMHD1 to promote its ubiquitin-dependent proteasomal degradation. In terms of assembly, (Microbial infection) Interacts (via C-terminus) with human cytomegalovirus protein UL35; this interaction induces the accumulation of cells in the G2 phase of the cell cycle. Ubiquitously expressed.

It is found in the cytoplasm. Its subcellular location is the nucleus. The protein localises to the cytoskeleton. It localises to the microtubule organizing center. The protein resides in the centrosome. It catalyses the reaction L-seryl-[protein] + ATP = O-phospho-L-seryl-[protein] + ADP + H(+). The catalysed reaction is L-threonyl-[protein] + ATP = O-phospho-L-threonyl-[protein] + ADP + H(+). It functions in the pathway protein modification; protein ubiquitination. Its function is as follows. Acts both as a substrate recognition component of E3 ubiquitin-protein ligase complexes and as an atypical serine/threonine-protein kinase, playing key roles in various processes such as cell cycle, telomerase regulation and histone modification. Probable substrate-specific adapter of a DCX (DDB1-CUL4-X-box) E3 ubiquitin-protein ligase complex, named CUL4A-RBX1-DDB1-DCAF1/VPRBP complex, which mediates ubiquitination and proteasome-dependent degradation of proteins such as NF2. Involved in the turnover of methylated proteins: recognizes and binds methylated proteins via its chromo domain, leading to ubiquitination of target proteins by the RBX1-DDB1-DCAF1/VPRBP complex. The CUL4A-RBX1-DDB1-DCAF1/VPRBP complex is also involved in B-cell development: DCAF1 is recruited by RAG1 to ubiquitinate proteins, leading to limit error-prone repair during V(D)J recombination. Also part of the EDVP complex, an E3 ligase complex that mediates ubiquitination of proteins such as TERT, leading to TERT degradation and telomerase inhibition. The EDVP complex also mediates ubiquitination and degradation of CCP110. Also acts as an atypical serine/threonine-protein kinase that specifically mediates phosphorylation of 'Thr-120' of histone H2A (H2AT120ph) in a nucleosomal context, thereby repressing transcription. H2AT120ph is present in the regulatory region of many tumor suppresor genes, down-regulates their transcription and is present at high level in a number of tumors. Involved in JNK-mediated apoptosis during cell competition process via its interaction with LLGL1 and LLGL2. By acting on TET dioxygenses, essential for oocyte maintenance at the primordial follicle stage, hence essential for female fertility. Functionally, (Microbial infection) In case of infection by HIV-1 virus, it is recruited by HIV-1 Vpr in order to hijack the CUL4A-RBX1-DDB1-DCAF1/VPRBP function leading to arrest the cell cycle in G2 phase, and also to protect the viral protein from proteasomal degradation by another E3 ubiquitin ligase. The HIV-1 Vpr protein hijacks the CUL4A-RBX1-DDB1-DCAF1/VPRBP complex to promote ubiquitination and degradation of proteins such as TERT and ZIP/ZGPAT. In terms of biological role, (Microbial infection) In case of infection by HIV-2 virus, it is recruited by HIV-2 Vpx in order to hijack the CUL4A-RBX1-DDB1-DCAF1/VPRBP function leading to enhanced efficiency of macrophage infection and promotion of the replication of cognate primate lentiviruses in cells of monocyte/macrophage lineage. The chain is DDB1- and CUL4-associated factor 1 from Homo sapiens (Human).